The following is a 1015-amino-acid chain: Translation initiation factor IF-2 (1015 aa).

Disordered regions lie at residues 124 to 144 (EKEP…EKKV), 159 to 179 (EVTV…PKPV), 196 to 230 (KKEE…KEEE), and 250 to 386 (IDLA…VSEE). Basic and acidic residues-rich tracts occupy residues 196 to 217 (KKEE…EKPV) and 265 to 315 (SKEE…DPNG). A tr-type G domain is found at 514-684 (HRAPIVTVMG…LLEAEMLDLK (171 aa)). A G1 region spans residues 523–530 (GHVDHGKT). 523 to 530 (GHVDHGKT) contributes to the GTP binding site. A G2 region spans residues 548 to 552 (GITQH). The tract at residues 570-573 (DTPG) is G3. GTP is bound by residues 570-574 (DTPGH) and 624-627 (NKID). Positions 624-627 (NKID) are G4. Residues 660-662 (SAK) are G5.

Belongs to the TRAFAC class translation factor GTPase superfamily. Classic translation factor GTPase family. IF-2 subfamily.

It is found in the cytoplasm. In terms of biological role, one of the essential components for the initiation of protein synthesis. Protects formylmethionyl-tRNA from spontaneous hydrolysis and promotes its binding to the 30S ribosomal subunits. Also involved in the hydrolysis of GTP during the formation of the 70S ribosomal complex. The polypeptide is Translation initiation factor IF-2 (Bacteroides fragilis (strain ATCC 25285 / DSM 2151 / CCUG 4856 / JCM 11019 / LMG 10263 / NCTC 9343 / Onslow / VPI 2553 / EN-2)).